A 451-amino-acid polypeptide reads, in one-letter code: CBL-interacting protein kinase 22 (451 aa).

Residues 26–301 form the Protein kinase domain; it reads YELGRVLGQG…IGEIFDHPWL (276 aa). Residues 32-40 and lysine 55 contribute to the ATP site; that span reads LGQGASSKV. The active-site Proton acceptor is the aspartate 165. Residues 183-216 form an activation loop region; sequence DFGLSAFADADQHLGATDGLAATHCGSPAYVAPE. Residues 330–356 enclose the NAF domain; that stretch reads ELEQAMELNAFDIIGFASGCDLSGLIG. Residues 361–389 form a PPI region; sequence RVRFVLPGGDSKSVLDKVEKLGREEGLVV.

This sequence belongs to the protein kinase superfamily. CAMK Ser/Thr protein kinase family. SNF1 subfamily. The cofactor is Mn(2+).

The catalysed reaction is L-seryl-[protein] + ATP = O-phospho-L-seryl-[protein] + ADP + H(+). It catalyses the reaction L-threonyl-[protein] + ATP = O-phospho-L-threonyl-[protein] + ADP + H(+). Its function is as follows. CIPK serine-threonine protein kinases interact with CBL proteins. Binding of a CBL protein to the regulatory NAF domain of CIPK protein lead to the activation of the kinase in a calcium-dependent manner. In Oryza sativa subsp. japonica (Rice), this protein is CBL-interacting protein kinase 22 (CIPK22).